A 97-amino-acid chain; its full sequence is Protein 9b (97 aa).

Positions 8–97 (VLPALHLVDP…PDEFVVVTAK (90 aa)) constitute a 9b domain.

This sequence belongs to the coronavirus group 2 protein 9b family. Homodimer.

The protein resides in the host cytoplasmic vesicle membrane. It localises to the host cytoplasm. This Rhinolophus ferrumequinum (Greater horseshoe bat) protein is Protein 9b.